Reading from the N-terminus, the 79-residue chain is Small ribosomal subunit protein bS18 (79 aa).

The protein belongs to the bacterial ribosomal protein bS18 family. In terms of assembly, part of the 30S ribosomal subunit. Forms a tight heterodimer with protein bS6.

Its function is as follows. Binds as a heterodimer with protein bS6 to the central domain of the 16S rRNA, where it helps stabilize the platform of the 30S subunit. The chain is Small ribosomal subunit protein bS18 from Bacillus pumilus (strain SAFR-032).